The chain runs to 130 residues: Fluoride-specific ion channel FluC (130 aa).

4 helical membrane passes run 9 to 29 (LAIILGAIPGALARYYATIFL), 39 to 59 (YATFLINFSGCVGMGLVVTLA), 71 to 91 (LLLAVGFLGSYTTFSTYALEV), and 104 to 124 (VLYGLGSLGIGTIGVLLGSLI). Positions 79 and 82 each coordinate Na(+).

This sequence belongs to the fluoride channel Fluc/FEX (TC 1.A.43) family.

The protein localises to the cell inner membrane. The catalysed reaction is fluoride(in) = fluoride(out). With respect to regulation, na(+) is not transported, but it plays an essential structural role and its presence is essential for fluoride channel function. Functionally, fluoride-specific ion channel. Important for reducing fluoride concentration in the cell, thus reducing its toxicity. This is Fluoride-specific ion channel FluC from Synechocystis sp. (strain ATCC 27184 / PCC 6803 / Kazusa).